Reading from the N-terminus, the 66-residue chain is Large ribosomal subunit protein bL35 (66 aa).

The interval 20-41 (GKVMSAQRGKRHGMIKRTKKQI) is disordered. Over residues 27 to 41 (RGKRHGMIKRTKKQI) the composition is skewed to basic residues.

It belongs to the bacterial ribosomal protein bL35 family.

The chain is Large ribosomal subunit protein bL35 from Rhodopseudomonas palustris (strain BisB5).